A 2528-amino-acid chain; its full sequence is MPAMEETQFHDDATVPIAIVGMSCRFPGNATSPEKLWELCSEGRSAWSKIPKSRFRQEGFYNPNAERVGTSNVIGGHFLEEDPSLFDASFFNLSAEAAKTMDPQFRLQLESVYEAMESAGITLEHFAGSDTSVYAGACFRDYQDSLVRDPDLVPRFLLTGNGAAMSSNRISYFYDLHGASMTVDTGCSTTLTALHLACQGLRNRESKTSIVTGANVILNPDMFVTMSSLGLDDALRENDTIRCIIRGTALNQDGKTATLTSPSQTAQSDLIRACYKAAALDPSDTAFLAAHGTGTRTGDAVEISAAADVFGENRLPDRPLWIGSLKTNIGHSEAISGLASVIQAALALEKGLIPPNINFKEPNEKLDQVSAVVKVPSTLEKWPVGSGVRRASVNNFGYGGANAHVILESVTTGSTHRADVNGHHQKNGTTNGHKGANGTTNELNGTNGTANGHDITTGTKDYEQLESFVIALSAKEEASTSSMVTNIGDYVRKLHVEDETKHLKSIAHTLGNHRSMFKWTAAKSIKSLGDLLGTAEEGAQWFAMGRELINTYPVFRQSLDRADRYLKEFGCEWSIIEELSRDAETTNVNDMMLSPPLCTAVQISLVLLLESWGIVSTAVTGHSSGEIAAAYAAGALDFRSAMAVTYFRGEVGLACQDKIVGQGGMIAVGLGPEDAEIRIAHVQSGKIVIACINSQSSVTVSGDLTGIVELEELLKAEGVFARRVKVQAAYHSHHMQVIAKGYLTSLKDILKPGKNFGEIIYSSPTTGKRETNVKLMASPQHWVNNMLSPVRFAESFQNMCFSNQKSSQSGEESRDVDIVLEVGPHGMLQGPIQQMMSLPRFETARIPYLSCLLRGQSAVHTMQTLAAGLMGLGYRVDLAAVNFPQGTSGVKVLHDLPSYPWNHKNSHWWEPRLNKAHRQRVHPPHDLLGSLIPGRDLREPTWRHFIRVHDIPWIRDHVVQSQLVYPGAGFICMAIEAMSQFHDLKDSQSKKIAGYRLADIDILRAMIVPDTLEGLEAHISLRPCSTKLLLTNDWYEFCVSSVGDDDRFLDHCRGRIAIELDTSNMADAAMTSSRGYSHTTGLTRSVDPSNLYRFLRAQGIYHGPIFQNLETISSRKNHSKSSFVVANTASVMPNGFQNPHIIHPTTLDSIFQGAYTALPGAGLDRNTAMIPRSIQELYLSSALTSEVGQCLVSDTSLIRYDGQSFTVNVDVSSKADNKHKPILEIKGLRNQSVGQIALQKGDSSNNDLCFKLDWALDISSVKQERLKEKFGFPLDPAEAHIIMGLRQACLYFIRQTLQSLTSSDRDQLDWHQKRFYDWMMYQIQLAKEDRLGPNSSAWLQCSSSDEQKLLENVRAASVNGEMVVHVGGSIPAILRHEIAPLELMLQDKQLYRYYTDAIKWDRSYQQIDQLVKLHAHKCPTAKIIEIGGGTGGCTRAVLDALSNHGAARCEQYDFTDVSSGFFEAAQQKFAAFADVIRFQKLDIEKDIEMQGFESGSYDLVIASQVLHATGVMENTMSNVQKLLKPGGKLLLVETTRDEMDLQLVFGLLPGWWLSSEEERKMSPSLSVNSWEKVLKKTGFNGLDVELRDCDSDEFYSFSVMMATASSTIASNSIEAAIVHGEVPLPDQFLDDLKAAISSFAGLHPVVGPLKSIDVTGKFCIFIEDPETNILSSPDENSYASIKELVTRCKGLIWVSRGGAMHGTRPDSSLKTGLLRTLRLEYTEKRLISLDLDPARPQWDYDSITTISEVLRQALVQQADSPIKDSEFAEQDGQLFVPRISSDISRNDNLSSDSARAAQMEPFHQLGKLLQMGIKTPGLIDTLQFSKTDAPDNLANDYIEIEPKAFGLNFRDVMVAMGQLEESIMGFECAGIVRRVGPSSADHGIKVGDRVCALLGGQWTNTVRVHWHSVAPIPETMNWETAASIPIVHVTAYISLVKIAKMQAGETVLIHAASGGVGQAAIILAKHAGAEIFATVGTDEKRELLVKVYKIPEDHIFLSRNALFAKNIRRKTNGKGVDVVLNCLAGGLLQESFDCLADFGRFIEIGKRDIELNHCLNMGMFARSTTFTAVDLIAIGRDRSYMVAEALPKIMALLQEKAIRPVTPISIYKIGDIETAFRLMQAGKHMGKIVITAPEDAMVPVVTQPPKLQLHPDASYLIVGGLGGIGRSLCRNFIENGARSLVLLSRNANVSQQSGEFLDELRSTSCIVHVVDCDISNKTQVESTMLRLKQELLPIRGIVHAGMVLQDSVFERMTLEDYNTAIRPKVQGSWNLHSGLSDRDLDFFIMLSSLAGVSGSASQANYTAGGAYQDALAKHRRVQGLPAVSIDLGMVQSVGYVAETKGVAERLVRMGYSPISELEVLKIVEHAITNPPPEISSGQIITGISTKPGRHWTESSWLQDARFATLRERARDAKEQSNSQGGGTDSKISPGQELSMATSLVEAIDVVGRAITAKLATMFLIAAESIIASKSLSEYGVDSLVAVELRNWLAAQLSSDVSVFDVTQSQSLTALATTVATKSARINKSLLVA.

Residues 14–409 (TVPIAIVGMS…GANAHVILES (396 aa)) enclose the Ketosynthase family 3 (KS3) domain. Active-site for beta-ketoacyl synthase activity residues include C187, H291, and H331. The tract at residues 420–457 (VNGHHQKNGTTNGHKGANGTTNELNGTNGTANGHDITT) is disordered. Residues 436–452 (ANGTTNELNGTNGTANG) show a composition bias toward low complexity. The malonyl-CoA:ACP transacylase (MAT) domain stretch occupies residues 538 to 856 (GAQWFAMGRE…PYLSCLLRGQ (319 aa)). Residues 925–1063 (HDLLGSLIPG…GRIAIELDTS (139 aa)) form an N-terminal hotdog fold region. The PKS/mFAS DH domain maps to 925-1239 (HDLLGSLIPG…NQSVGQIALQ (315 aa)). The tract at residues 925-1239 (HDLLGSLIPG…NQSVGQIALQ (315 aa)) is dehydratase (DH) domain. The Proton acceptor; for dehydratase activity role is filled by H957. A C-terminal hotdog fold region spans residues 1083–1239 (TRSVDPSNLY…NQSVGQIALQ (157 aa)). D1148 serves as the catalytic Proton donor; for dehydratase activity. The tract at residues 1390–1590 (LYRYYTDAIK…GLDVELRDCD (201 aa)) is methyltransferase (CMet) domain. Residues 1817–2130 (GLIDTLQFSK…AGKHMGKIVI (314 aa)) are enoyl reductase (ER) (ER) domain. The tract at residues 2153-2331 (ASYLIVGGLG…AVSIDLGMVQ (179 aa)) is ketoreductase (KR) domain. The disordered stretch occupies residues 2408–2430 (RARDAKEQSNSQGGGTDSKISPG). In terms of domain architecture, Carrier spans 2441-2518 (EAIDVVGRAI…ALATTVATKS (78 aa)). An O-(pantetheine 4'-phosphoryl)serine modification is found at S2478.

The protein operates within secondary metabolite biosynthesis. In terms of biological role, highly reducing polyketide synthase (HR-PKS); part of the gene cluster that mediates the biosynthesis of squalestatin S1 (SQS1, also known as zaragozic acid A), a heavily oxidized fungal polyketide that offers potent cholesterol lowering activity by targeting squalene synthase (SS). SQS1 is composed of a 2,8-dioxobicyclic[3.2.1]octane-3,4,5-tricarboxyclic acid core that is connected to two lipophilic polyketide arms. These initial steps feature the priming of an unusual benzoic acid starter unit onto the highly reducing polyketide synthase clz14, followed by oxaloacetate extension and product release to generate a tricarboxylic acid containing product. The phenylalanine ammonia lyase (PAL) clz10 and the acyl-CoA ligase clz12 are involved in transforming phenylalanine into benzoyl-CoA. The citrate synthase-like protein clz17 is involved in connecting the C-alpha-carbons of the hexaketide chain and oxaloacetate to afford the tricarboxylic acid unit. The potential hydrolytic enzymes, clz11 and clz13, are in close proximity to pks2 and may participate in product release. On the other side, the tetraketide arm is synthesized by a the squalestatin tetraketide synthase clz2 and enzymatically esterified to the core in the last biosynthetic step, by the acetyltransferase clz6. The biosynthesis of the tetraketide must involve 3 rounds of chain extension. After the first and second rounds methyl-transfer occurs, and in all rounds of extension the ketoreductase and dehydratase are active. The enoyl reductase and C-MeT of clz2 are not active in the final round of extension. The acetyltransferase clz6 appears to have a broad substrate selectivity for its acyl CoA substrate, allowing the in vitro synthesis of novel squalestatins. The biosynthesis of SQS1 requires several oxidative steps likely performed by oxidoreductases clz3, clz15 and clz16. Finally, in support of the identification of the cluster as being responsible for SQS1 production, the cluster contains a gene encoding a putative squalene synthase (SS) clz20, suggesting a likely mechanism for self-resistance. In Cochliobolus lunatus (Filamentous fungus), this protein is Squalestatin tetraketide synthase clz2.